Here is a 107-residue protein sequence, read N- to C-terminus: uncharacterized protein (107 aa).

Residues 86-107 (QVSNHEEDADVLETQDDNAEQV) are disordered. Over residues 92–107 (EDADVLETQDDNAEQV) the composition is skewed to acidic residues.

This is an uncharacterized protein from Rickettsia prowazekii (strain Madrid E).